The sequence spans 312 residues: Copper chaperone for superoxide dismutase, chloroplastic (312 aa).

A chloroplast-targeting transit peptide spans 1-78 (MVGFLRALTA…AAAAATADLS (78 aa)). The region spanning 89–152 (ELMTEFMVDM…TLHQTGRDAR (64 aa)) is the HMA domain. Residues Cys100, Cys103, Cys301, and Cys303 each coordinate Cu cation.

This sequence in the C-terminal section; belongs to the Cu-Zn superoxide dismutase family. Requires Cu(2+) as cofactor.

The protein resides in the plastid. It localises to the chloroplast. Functionally, copper chaperone for superoxide dismutases (SODs). Binds copper ions and delivers them specifically to SODs. Is required for assistance in SODs disulfide bond formation and thereby activation of SODs. In Oryza sativa subsp. japonica (Rice), this protein is Copper chaperone for superoxide dismutase, chloroplastic (CCS).